The primary structure comprises 277 residues: Energy-coupling factor transporter ATP-binding protein EcfA1 (277 aa).

Residues 5-243 (IRAQNVSFCY…VEVLKKIGLD (239 aa)) form the ABC transporter domain. Position 42–49 (42–49 (GHNGSGKS)) interacts with ATP.

This sequence belongs to the ABC transporter superfamily. Energy-coupling factor EcfA family. As to quaternary structure, forms a stable energy-coupling factor (ECF) transporter complex composed of 2 membrane-embedded substrate-binding proteins (S component), 2 ATP-binding proteins (A component) and 2 transmembrane proteins (T component).

Its subcellular location is the cell membrane. ATP-binding (A) component of a common energy-coupling factor (ECF) ABC-transporter complex. Unlike classic ABC transporters this ECF transporter provides the energy necessary to transport a number of different substrates. The polypeptide is Energy-coupling factor transporter ATP-binding protein EcfA1 (Caldanaerobacter subterraneus subsp. tengcongensis (strain DSM 15242 / JCM 11007 / NBRC 100824 / MB4) (Thermoanaerobacter tengcongensis)).